A 160-amino-acid polypeptide reads, in one-letter code: Large ribosomal subunit protein eL14 (160 aa).

The segment at 136-160 (SDGTPRILKKDRRERLRAEKAKAKK) is disordered. A compositionally biased stretch (basic and acidic residues) spans 146–160 (DRRERLRAEKAKAKK).

The protein belongs to the eukaryotic ribosomal protein eL14 family.

This is Large ribosomal subunit protein eL14 (RpL14) from Drosophila virilis (Fruit fly).